We begin with the raw amino-acid sequence, 1024 residues long: MDIKKILVIGSGAIKVAEAAEFDYSGSQALKAFREEGIKTVLVNPNIATIQTSKFLADRVYFIPIQRQFLAEVIEQERPDAIACGFGGQTALSACVDLDEAGVLEKYGVRVVGTPVRGIKRALSRDLFQKAMREAGIPVPPSSPAKSPEEAIEIARYLGYPVVVRVSFNLGGAGAFVARSEEALKARIYKAFAQSAIGEVLVEKYLEGWKEIEFEVVRDAYDNVAAVVCMENIDPMGVHTGDSIVVAPCLTLTDEEYQTARNISIGVVRTIELIGEGNVQVAINYAGPEQYAIETNPRMSRSSALASKASGYPLAYIAAKLALGYRLDEVLNQVTRRTVASFEPALDYIVVKHPRWESDRFGVTEGLGPEMMSIGEAMGIGRTLEEAWQKAVRMIDIGEPGLVGGPMFQSLTLEEALKCIKDYVPYWPICAAKAIYLGVSVEEIYKINKVDKFFLNAIKRIVDVYKRLEAGEVDLDEAKVLGFSDWQIAKALGKSVDEIRAMRRRPVVKKIDTLAGEWPADTNYLYLTYGGQYDDKTPGVDYLVVGAGVFRIGVSVEFDWSTVTLATELKNRGYRVAILNYNPETVSTDWDIVDKLYFDEISVERVLDIVEKEGNGVTVVLYAGGQIGQRLYVPLEKVGVKIGGTRAKSIDMAEDRGKFSKLLDRLGIKQPPWLYAASVEEAVKLAEGLGFPVLLRPSYVLGGTYMAVAYNKEELINFLSKAAKVSGEYPVVISKFMPRGIEAEVDAVSDGVKIVATPIEHIEPPGVHSGDSTMVLPPRRLEEWAVKKMIDIAHTLAVELEVKGPLNVQFIVQDDVYVIEANLRVSRSMPLVSKATGVNYMSLVADVLTHGRLAVDEERITLKPSKWWVKSPQFSWARLRGAYPRLGPVMYSTGEVASNGSVFEEALLKSWLSATPNKIPSKTALIYTYDPHHEELLRQAAGLLSWRLEIYTPEQLGGKIAEMLKWRKIDIVMTAGITPEKDFHVRRTAADTNTPLVLDSTLAVELAKAFNWYYKNGKLEVAPW.

Positions 1–396 (MDIKKILVIG…AWQKAVRMID (396 aa)) are carboxyphosphate synthetic domain. Residues R125, R165, G171, G172, K204, L206, E211, G237, V238, H239, Q280, and E294 each contribute to the ATP site. Positions 129-323 (QKAMREAGIP…LAYIAAKLAL (195 aa)) constitute an ATP-grasp 1 domain. Residues Q280, E294, and N296 each contribute to the Mg(2+) site. 3 residues coordinate Mn(2+): Q280, E294, and N296. An oligomerization domain region spans residues 397-536 (IGEPGLVGGP…LTYGGQYDDK (140 aa)). A carbamoyl phosphate synthetic domain region spans residues 536 to 917 (KTPGVDYLVV…LKSWLSATPN (382 aa)). The region spanning 660 to 849 (SKLLDRLGIK…YMSLVADVLT (190 aa)) is the ATP-grasp 2 domain. Residues R696, K735, E742, G766, V767, H768, S769, Q809, and E820 each coordinate ATP. Residues Q809, E820, and N822 each coordinate Mg(2+). Mn(2+) contacts are provided by Q809, E820, and N822. An MGS-like domain is found at 917–1024 (NKIPSKTALI…KNGKLEVAPW (108 aa)). Residues 918 to 1024 (KIPSKTALIY…KNGKLEVAPW (107 aa)) are allosteric domain.

The protein belongs to the CarB family. Composed of two chains; the small (or glutamine) chain promotes the hydrolysis of glutamine to ammonia, which is used by the large (or ammonia) chain to synthesize carbamoyl phosphate. Tetramer of heterodimers (alpha,beta)4. Mg(2+) serves as cofactor. Mn(2+) is required as a cofactor.

The enzyme catalyses hydrogencarbonate + L-glutamine + 2 ATP + H2O = carbamoyl phosphate + L-glutamate + 2 ADP + phosphate + 2 H(+). It catalyses the reaction hydrogencarbonate + NH4(+) + 2 ATP = carbamoyl phosphate + 2 ADP + phosphate + 2 H(+). Its pathway is amino-acid biosynthesis; L-arginine biosynthesis; carbamoyl phosphate from bicarbonate: step 1/1. The protein operates within pyrimidine metabolism; UMP biosynthesis via de novo pathway; (S)-dihydroorotate from bicarbonate: step 1/3. In terms of biological role, large subunit of the glutamine-dependent carbamoyl phosphate synthetase (CPSase). CPSase catalyzes the formation of carbamoyl phosphate from the ammonia moiety of glutamine, carbonate, and phosphate donated by ATP, constituting the first step of 2 biosynthetic pathways, one leading to arginine and/or urea and the other to pyrimidine nucleotides. The large subunit (synthetase) binds the substrates ammonia (free or transferred from glutamine from the small subunit), hydrogencarbonate and ATP and carries out an ATP-coupled ligase reaction, activating hydrogencarbonate by forming carboxy phosphate which reacts with ammonia to form carbamoyl phosphate. This Pyrobaculum aerophilum (strain ATCC 51768 / DSM 7523 / JCM 9630 / CIP 104966 / NBRC 100827 / IM2) protein is Carbamoyl phosphate synthase large chain.